Here is a 339-residue protein sequence, read N- to C-terminus: Nicotinate-nucleotide--dimethylbenzimidazole phosphoribosyltransferase (339 aa).

The Proton acceptor role is filled by glutamate 306.

Belongs to the CobT family.

The catalysed reaction is 5,6-dimethylbenzimidazole + nicotinate beta-D-ribonucleotide = alpha-ribazole 5'-phosphate + nicotinate + H(+). It participates in nucleoside biosynthesis; alpha-ribazole biosynthesis; alpha-ribazole from 5,6-dimethylbenzimidazole: step 1/2. Its function is as follows. Catalyzes the synthesis of alpha-ribazole-5'-phosphate from nicotinate mononucleotide (NAMN) and 5,6-dimethylbenzimidazole (DMB). This chain is Nicotinate-nucleotide--dimethylbenzimidazole phosphoribosyltransferase, found in Brucella anthropi (strain ATCC 49188 / DSM 6882 / CCUG 24695 / JCM 21032 / LMG 3331 / NBRC 15819 / NCTC 12168 / Alc 37) (Ochrobactrum anthropi).